The primary structure comprises 351 residues: Leukotriene B4 receptor 1 (351 aa).

The Extracellular portion of the chain corresponds to 1–21 (MAANTTSTAATSSPGGMSLSL). Residue asparagine 4 is glycosylated (N-linked (GlcNAc...) asparagine). Residues 22–44 (LPIVLLSVALVVGLPGNSFVVWS) form a helical membrane-spanning segment. Topologically, residues 45–56 (ILKRMQKRSVTA) are cytoplasmic. A helical membrane pass occupies residues 57 to 77 (LLVLNLALADLAVLLTAPFFL). At 78–93 (HFLARGTWSFEVTGCR) the chain is on the extracellular side. A helical membrane pass occupies residues 94–115 (LCHYVCGVSMYASVLLITIMSL). Over 116–140 (DRSLAVARPFVSQKVRTKAFARWVL) the chain is Cytoplasmic. A helical transmembrane segment spans residues 141–161 (AGIWVVSFLLAIPVLVYRTVT). Residues 162 to 179 (PKNKTLICDSRYPSDGHK) lie on the Extracellular side of the membrane. Asparagine 164 carries an N-linked (GlcNAc...) asparagine glycan. The helical transmembrane segment at 180-200 (VFHLLFEAITGFLLPFLAVVA) threads the bilayer. At 201-222 (SYSDIGRRLQARRFRRSRRTGR) the chain is on the cytoplasmic side. The chain crosses the membrane as a helical span at residues 223–243 (LVVLIILAFAAFWLPYHLVNL). Residues 244–268 (VEAGRTLAGWDKNSPAGQRLKLARY) lie on the Extracellular side of the membrane. Residues 269-289 (VLIALAFLSSSVNPVLYACAG) traverse the membrane as a helical segment. At 290 to 351 (GGLLRSAGVG…TSSTPPESSK (62 aa)) the chain is on the cytoplasmic side. Composition is skewed to polar residues over residues 311–327 (EVSS…TPKA) and 339–351 (SFMT…ESSK). The interval 311–351 (EVSSTRRGGTLVQTPKATPTCPEPGPTDSFMTSSTPPESSK) is disordered.

It belongs to the G-protein coupled receptor 1 family. Post-translationally, phosphorylated by GRK6 upon leukotriene B4 binding; which promotes desensitization. As to expression, exclusively expressed in polymorphonuclear leukocytes.

It is found in the cell membrane. Its function is as follows. Receptor for leukotriene B4, a potent chemoattractant involved in inflammation and immune response. The sequence is that of Leukotriene B4 receptor 1 (Ltb4r) from Rattus norvegicus (Rat).